The following is a 458-amino-acid chain: Argininosuccinate lyase (458 aa).

Belongs to the lyase 1 family. Argininosuccinate lyase subfamily.

The protein resides in the cytoplasm. The catalysed reaction is 2-(N(omega)-L-arginino)succinate = fumarate + L-arginine. It functions in the pathway amino-acid biosynthesis; L-arginine biosynthesis; L-arginine from L-ornithine and carbamoyl phosphate: step 3/3. This is Argininosuccinate lyase from Salmonella choleraesuis (strain SC-B67).